A 568-amino-acid polypeptide reads, in one-letter code: Sulfite reductase [NADPH] hemoprotein beta-component (568 aa).

Residues Cys426, Cys432, Cys471, and Cys475 each contribute to the [4Fe-4S] cluster site. Siroheme is bound at residue Cys475.

The protein belongs to the nitrite and sulfite reductase 4Fe-4S domain family. Alpha(8)-beta(8). The alpha component is a flavoprotein, the beta component is a hemoprotein. Requires siroheme as cofactor. [4Fe-4S] cluster serves as cofactor.

It carries out the reaction hydrogen sulfide + 3 NADP(+) + 3 H2O = sulfite + 3 NADPH + 4 H(+). Its pathway is sulfur metabolism; hydrogen sulfide biosynthesis; hydrogen sulfide from sulfite (NADPH route): step 1/1. Functionally, component of the sulfite reductase complex that catalyzes the 6-electron reduction of sulfite to sulfide. This is one of several activities required for the biosynthesis of L-cysteine from sulfate. In Xylella fastidiosa (strain 9a5c), this protein is Sulfite reductase [NADPH] hemoprotein beta-component.